The primary structure comprises 421 residues: Meiotic fizzy-related protein 1 (421 aa).

Residues 79–107 (DTPDRKSYSLSPISPQSQDMLRQPQKPKR) are disordered. Positions 86–98 (YSLSPISPQSQDM) are enriched in polar residues. WD repeat units follow at residues 123–160 (KNDF…VVQL), 164–203 (GATN…SVRS), 206–246 (GHSE…EMMK), 247–286 (VHEQ…PLHK), 289–331 (EHTA…LQNK), 333–374 (DTGS…NIAN), and 377–416 (AHTN…PKEE).

Belongs to the WD repeat CDC20/Fizzy family. Interacts with mes1.

It localises to the nucleus. Its function is as follows. Meiosis-specific activator of the anaphase promoting complex/cyclosome (APC/C). Involved in cdc13 degradation. This is Meiotic fizzy-related protein 1 (mfr1) from Schizosaccharomyces pombe (strain 972 / ATCC 24843) (Fission yeast).